The sequence spans 479 residues: MSVPVQHPMYIDGQFVTWRGDAWIDVVNPATEAVISRIPDGQAEDARKAIDAAERAQPEWEALPAIERASWLRKISAGIRERASEISALIVEEGGKIQQLAEVEVAFTADYIDYMAEWARRYEGEIIQSDRPGENILLFKRALGVTTGILPWNFPFFLIARKMAPALLTGNTIVIKPSEFTPNNAIAFAKIVDEIGLPRGVFNLVLGRGETVGQELAGNPKVAMVSMTGSVSAGEKIMATAAKNITKVCLELGGKAPAIVMDDADLELAVKAIVDSRVINSGQVCNCAERVYVQKGIYDQFVNRLGEAMQAVQFGNPAERNDIAMGPLINAAALERVEQKVARAVEEGARVAFGGKAVEGKGYYYPPTLLLDVRQEMSIMHEETFGPVLPVVAFDTLEDAISMANDSDYGLTSSIYTQNLNVAMKAIKGLKFGETYINRENFEAMQGFHAGWRKSGIGGADGKHGLHEYLQTQVVYLQS.

Leu150 is a binding site for NAD(+). Arg161 is a binding site for (S)-lactate. Residues 176 to 179, Gln214, and Ser230 each bind NAD(+); that span reads KPSE. Residue Glu251 coordinates (S)-lactate. Active-site residues include Glu251 and Cys285. Asn286 contributes to the (S)-lactate binding site. Arg336 contacts NAD(+). Residues Glu443 and His449 each coordinate (S)-lactate.

The protein belongs to the aldehyde dehydrogenase family. In terms of assembly, homotetramer.

It catalyses the reaction (S)-lactaldehyde + NAD(+) + H2O = (S)-lactate + NADH + 2 H(+). The catalysed reaction is glycolaldehyde + NAD(+) + H2O = glycolate + NADH + 2 H(+). It participates in carbohydrate degradation; L-fucose degradation. Its pathway is carbohydrate degradation; L-rhamnose degradation. Substrate inhibition is very strong with lactaldehyde, diminishing progressively with glycolaldehyde, glyceraldehyde or methylglyoxal. Inhibited by p-hydroxy mercuribenzoate and by some cations, including Mn(2+), Ca(2+), Cu(2+) and Zn(2+). Inhibited by NADH. Functionally, catalyzes the irreversible oxidation of L-lactaldehyde to L-lactate. Also shows high activity with glycolaldehyde and L-glyceraldehyde. Has weaker activity with various aldehydes such as methylglyoxal, propionaldehyde or benzaldehyde. Involved in the degradation of lactaldehyde produced during metabolism of L-fucose and L-rhamnose. It may be involved in several other metabolic pathways. This is Lactaldehyde dehydrogenase (aldA) from Escherichia coli (strain K12).